Reading from the N-terminus, the 310-residue chain is Olfactory receptor 10N1 (310 aa).

The Extracellular segment spans residues 1 to 23 (MDNYTLLNEFILLGIPQTQGLET). A glycan (N-linked (GlcNAc...) asparagine) is linked at N3. The helical transmembrane segment at 24-44 (LLFVVFLFIYFFTLLGNSLIF) threads the bilayer. The Cytoplasmic segment spans residues 45-55 (TAIISSSTLHT). The helical transmembrane segment at 56 to 76 (PMYFFLGLLSVFDMLFPSVTC) threads the bilayer. At 77–95 (PKMLFYLSVRSPAISYKGC) the chain is on the extracellular side. A disulfide bond links C95 and C187. A helical membrane pass occupies residues 96–116 (AAQLFFYHLLGSTEGCLYSVM). At 117 to 136 (AYDRYVAICHPLRYMLIMKP) the chain is on the cytoplasmic side. The helical transmembrane segment at 137–157 (GVCVSLVIIAWLVGCLHATIL) threads the bilayer. Topologically, residues 158–202 (TSLTFQLVYCASNQVDYFFCDLPAVLPLACTDSKLARKVGSINVG) are extracellular. The helical transmembrane segment at 203–223 (FLALMLLFSVCVSYVHIGVAI) threads the bilayer. At 224-237 (LRIRSAEGRQKAFS) the chain is on the cytoplasmic side. A helical transmembrane segment spans residues 238-258 (TCSAHLTAILCAYGPVIIIYL). Over 259-264 (QRTPNP) the chain is Extracellular. A helical membrane pass occupies residues 265–285 (LLGAVVQILNNIVSPMLNSLI). Topologically, residues 286-310 (YSLRNKEVKRSLRRVFQNITFHGQK) are cytoplasmic.

The protein belongs to the G-protein coupled receptor 1 family.

It is found in the cell membrane. In terms of biological role, odorant receptor. This Mus musculus (Mouse) protein is Olfactory receptor 10N1.